Consider the following 370-residue polypeptide: DNA replication and repair protein RecF (370 aa).

Gly33–Thr40 serves as a coordination point for ATP.

Belongs to the RecF family.

It is found in the cytoplasm. Functionally, the RecF protein is involved in DNA metabolism; it is required for DNA replication and normal SOS inducibility. RecF binds preferentially to single-stranded, linear DNA. It also seems to bind ATP. This is DNA replication and repair protein RecF from Moorella thermoacetica (strain ATCC 39073 / JCM 9320).